A 436-amino-acid polypeptide reads, in one-letter code: 3-phosphoshikimate 1-carboxyvinyltransferase (436 aa).

K22, S23, and R27 together coordinate 3-phosphoshikimate. Residue K22 participates in phosphoenolpyruvate binding. 2 residues coordinate phosphoenolpyruvate: G95 and R123. 6 residues coordinate 3-phosphoshikimate: S170, S171, Q172, S201, D322, and K349. Q172 serves as a coordination point for phosphoenolpyruvate. D322 functions as the Proton acceptor in the catalytic mechanism. Phosphoenolpyruvate contacts are provided by R353, R397, and K422.

This sequence belongs to the EPSP synthase family. In terms of assembly, monomer.

The protein resides in the cytoplasm. The catalysed reaction is 3-phosphoshikimate + phosphoenolpyruvate = 5-O-(1-carboxyvinyl)-3-phosphoshikimate + phosphate. The protein operates within metabolic intermediate biosynthesis; chorismate biosynthesis; chorismate from D-erythrose 4-phosphate and phosphoenolpyruvate: step 6/7. Functionally, catalyzes the transfer of the enolpyruvyl moiety of phosphoenolpyruvate (PEP) to the 5-hydroxyl of shikimate-3-phosphate (S3P) to produce enolpyruvyl shikimate-3-phosphate and inorganic phosphate. This Ralstonia nicotianae (strain ATCC BAA-1114 / GMI1000) (Ralstonia solanacearum) protein is 3-phosphoshikimate 1-carboxyvinyltransferase.